The sequence spans 489 residues: ERO1-like protein alpha (489 aa).

Positions M1–A20 are cleaved as a signal peptide. Intrachain disulfides connect C27–C40, C29–C38, C77–C382, C86–C91, C86–C123, C91–C96, C200–C232, and C385–C388. FAD contacts are provided by R179, T181, and W192. Residues S243 and H246 each contribute to the FAD site. N271 carries N-linked (GlcNAc...) asparagine glycosylation. Positions 278 and 291 each coordinate FAD. A glycan (N-linked (GlcNAc...) asparagine) is linked at N375.

It belongs to the EROs family. In terms of assembly, predominantly monomer. May function both as a monomer and a homodimer. Requires FAD as cofactor. In terms of processing, the Cys-86/Cys-91 and Cys-385/Cys-388 disulfide bonds constitute the redox-active center. The Cys-86/Cys-91 disulfide bond may accept electron from protein disulfide isomerase (PDI) and funnel them to the active site disulfide Cys-385/Cys-388.

Its subcellular location is the endoplasmic reticulum membrane. Its activity is regulated as follows. Enzyme activity is tightly regulated to prevent the accumulation of reactive oxygen species in the endoplasmic reticulum. Reversibly down-regulated by the formation of disulfide bonds between the active site Cys-86 and Cys-123, and between Cys-91 and Cys-96. Glutathione may be required to regulate its activity in the endoplasmic reticulum. Its function is as follows. Oxidoreductase involved in disulfide bond formation in the endoplasmic reticulum. Efficiently reoxidizes P4HB/PDI, the enzyme catalyzing protein disulfide formation, in order to allow P4HB to sustain additional rounds of disulfide formation. Following P4HB reoxidation, passes its electrons to molecular oxygen via FAD, leading to the production of reactive oxygen species (ROS) in the cell. Required for the folding of immunoglobulins. This Danio rerio (Zebrafish) protein is ERO1-like protein alpha.